The chain runs to 314 residues: MKLKKPKFWDHKKPSFFSYLLLPFSIILGLITKIKSKPKFSNSKIKTICVGNIYIGGTGKTSLAIKIKEILDKNNIRACFIKKFYPNQTDEQKLLSKNGVLFSNLKRITALNEAISEGFEVAIFDDGLQDSTIKYDLEIVCFNNLNWIGNGLTLPSGPLRENINNLKSYENVFLNGNEESLIAIKEQIKRINPNININSGKYIPLNIDEFDKDQNYLVFSGIGNHKTFVEMLKNNKLKIVSDLEYPDHYQYSKKDFDEIIINAKKFNAHIITTEKDYLRLENLNKNEIFYVKSSLDISDEKNLTNKLIKLNEKN.

Position 54-61 (54-61 (YIGGTGKT)) interacts with ATP.

Belongs to the LpxK family.

The catalysed reaction is a lipid A disaccharide + ATP = a lipid IVA + ADP + H(+). Its pathway is glycolipid biosynthesis; lipid IV(A) biosynthesis; lipid IV(A) from (3R)-3-hydroxytetradecanoyl-[acyl-carrier-protein] and UDP-N-acetyl-alpha-D-glucosamine: step 6/6. Its function is as follows. Transfers the gamma-phosphate of ATP to the 4'-position of a tetraacyldisaccharide 1-phosphate intermediate (termed DS-1-P) to form tetraacyldisaccharide 1,4'-bis-phosphate (lipid IVA). The protein is Tetraacyldisaccharide 4'-kinase of Pelagibacter ubique (strain HTCC1062).